The following is a 239-amino-acid chain: Geranylgeranylglyceryl phosphate synthase (239 aa).

Positions 18 and 45 each coordinate Mg(2+). Sn-glycerol 1-phosphate contacts are provided by residues 166-172, 197-198, and 219-220; these read YLEAGSG, GG, and GT.

The protein belongs to the GGGP/HepGP synthase family. Group II subfamily. Requires Mg(2+) as cofactor.

It is found in the cytoplasm. It carries out the reaction sn-glycerol 1-phosphate + (2E,6E,10E)-geranylgeranyl diphosphate = sn-3-O-(geranylgeranyl)glycerol 1-phosphate + diphosphate. The protein operates within membrane lipid metabolism; glycerophospholipid metabolism. In terms of biological role, prenyltransferase that catalyzes the transfer of the geranylgeranyl moiety of geranylgeranyl diphosphate (GGPP) to the C3 hydroxyl of sn-glycerol-1-phosphate (G1P). This reaction is the first ether-bond-formation step in the biosynthesis of archaeal membrane lipids. The protein is Geranylgeranylglyceryl phosphate synthase of Pyrobaculum arsenaticum (strain DSM 13514 / JCM 11321 / PZ6).